Consider the following 105-residue polypeptide: ATP synthase subunit c (105 aa).

The next 2 helical transmembrane spans lie at 37-57 and 82-102; these read IGAG…GYIF and SAIS…LIFV.

It belongs to the ATPase C chain family. In terms of assembly, F-type ATPases have 2 components, F(1) - the catalytic core - and F(0) - the membrane proton channel. F(1) has five subunits: alpha(3), beta(3), gamma(1), delta(1), epsilon(1). F(0) has three main subunits: a(1), b(2) and c(10-14). The alpha and beta chains form an alternating ring which encloses part of the gamma chain. F(1) is attached to F(0) by a central stalk formed by the gamma and epsilon chains, while a peripheral stalk is formed by the delta and b chains.

The protein resides in the cell membrane. Functionally, f(1)F(0) ATP synthase produces ATP from ADP in the presence of a proton or sodium gradient. F-type ATPases consist of two structural domains, F(1) containing the extramembraneous catalytic core and F(0) containing the membrane proton channel, linked together by a central stalk and a peripheral stalk. During catalysis, ATP synthesis in the catalytic domain of F(1) is coupled via a rotary mechanism of the central stalk subunits to proton translocation. In terms of biological role, key component of the F(0) channel; it plays a direct role in translocation across the membrane. A homomeric c-ring of between 10-14 subunits forms the central stalk rotor element with the F(1) delta and epsilon subunits. In Mycoplasma pneumoniae (strain ATCC 29342 / M129 / Subtype 1) (Mycoplasmoides pneumoniae), this protein is ATP synthase subunit c.